A 553-amino-acid chain; its full sequence is Cysteine desulfurase IscS (553 aa).

Over residues 102–122 (NNISSNNTQYNNNSSNSGSLN) the composition is skewed to low complexity. A disordered region spans residues 102-125 (NNISSNNTQYNNNSSNSGSLNDEG).

It belongs to the class-V pyridoxal-phosphate-dependent aminotransferase family. NifS/IscS subfamily. As to quaternary structure, homotetramer. Interacts with Isd11; the interaction enhances cysteine desulfurase activity of IscS. Interacts with IscU. Component of a complex, at least composed of IscS, Isd11 and IscU. Pyridoxal 5'-phosphate is required as a cofactor.

Its subcellular location is the mitochondrion. The enzyme catalyses (sulfur carrier)-H + L-cysteine = (sulfur carrier)-SH + L-alanine. It participates in cofactor biosynthesis; iron-sulfur cluster biosynthesis. In terms of biological role, catalyzes sulfur activation and mobilization in iron-sulfur cluster formation (ISC) pathway for iron-sulfur (Fe-S) cluster biogenesis. Active when in complex with a partner protein Isd11. The chain is Cysteine desulfurase IscS from Plasmodium falciparum (isolate 3D7).